A 418-amino-acid chain; its full sequence is UDP-N-acetylglucosamine 1-carboxyvinyltransferase (418 aa).

Residue 23–24 (KN) coordinates phosphoenolpyruvate. Residue Arg-93 participates in UDP-N-acetyl-alpha-D-glucosamine binding. Asp-117 acts as the Proton donor in catalysis. Residues Asp-305 and Val-327 each coordinate UDP-N-acetyl-alpha-D-glucosamine.

This sequence belongs to the EPSP synthase family. MurA subfamily.

The protein resides in the cytoplasm. It carries out the reaction phosphoenolpyruvate + UDP-N-acetyl-alpha-D-glucosamine = UDP-N-acetyl-3-O-(1-carboxyvinyl)-alpha-D-glucosamine + phosphate. The protein operates within cell wall biogenesis; peptidoglycan biosynthesis. Cell wall formation. Adds enolpyruvyl to UDP-N-acetylglucosamine. This chain is UDP-N-acetylglucosamine 1-carboxyvinyltransferase, found in Mycobacterium leprae (strain TN).